A 108-amino-acid chain; its full sequence is uncharacterized protein (108 aa).

Residues 1 to 20 (MNLKSIIFVLFIAFFAFSLA) form the signal peptide. N-linked (GlcNAc...) asparagine glycosylation occurs at Asn39.

It belongs to the Dictyostelium gerABC family.

It localises to the secreted. This is an uncharacterized protein from Dictyostelium discoideum (Social amoeba).